The following is a 112-amino-acid chain: MAGKMSIVLFVLLVVFLTQNQVSRANIMRDEQQQQQRNNQLYGVSEGRLHPQDCQPKCTYRCSKTSYKKPCMFFCQKCCAKCLCVPAGTYGNKQSCPCYNNWKTKRGGPKCP.

Positions 1-25 are cleaved as a signal peptide; the sequence is MAGKMSIVLFVLLVVFLTQNQVSRA.

Belongs to the GASA family. In terms of processing, six disulfide bonds may be present. In terms of tissue distribution, all shoot organs.

Its subcellular location is the secreted. The protein is Protein GAST1 (GAST1) of Solanum lycopersicum (Tomato).